Here is a 369-residue protein sequence, read N- to C-terminus: Transmembrane protein 144 homolog A (369 aa).

The next 10 helical transmembrane spans lie at 6 to 26 (VIGYIGSAAAIIGFGSNYVPV), 35 to 55 (LSYAFILSIGGLCVAFIAMMI), 63 to 83 (PIGILGGSLWAMANLLIIPII), 85 to 105 (LVGLGLGVLLWSSIGIVVGFF), 122 to 142 (DWMNWLGFVGIVISIFCFFFI), 221 to 241 (VAGISMSIICGVLLGVNMIPM), 256 to 276 (IIFSQFAGVFLFNAFTFMFYA), 288 to 308 (TVFPSFISGVMWGIANCGLMI), 318 to 338 (GYPISCSGPMIISSLWSVFYF), and 347 to 367 (LLILCGSFLFLISGIILLAFS).

Belongs to the TMEM144 family.

The protein localises to the membrane. The chain is Transmembrane protein 144 homolog A (tmem144A) from Dictyostelium discoideum (Social amoeba).